The chain runs to 287 residues: tRNA uridine(34) hydroxylase (287 aa).

Positions 132 to 226 (QGRPVVMLDT…YFEEVGGAHY (95 aa)) constitute a Rhodanese domain. The active-site Cysteine persulfide intermediate is the Cys-186.

Belongs to the TrhO family.

It catalyses the reaction uridine(34) in tRNA + AH2 + O2 = 5-hydroxyuridine(34) in tRNA + A + H2O. Catalyzes oxygen-dependent 5-hydroxyuridine (ho5U) modification at position 34 in tRNAs. The chain is tRNA uridine(34) hydroxylase from Paraburkholderia phytofirmans (strain DSM 17436 / LMG 22146 / PsJN) (Burkholderia phytofirmans).